Reading from the N-terminus, the 132-residue chain is Large ribosomal subunit protein uL14 (132 aa).

The protein belongs to the universal ribosomal protein uL14 family. Part of the 50S ribosomal subunit. Forms a cluster with proteins L3 and L24e, part of which may contact the 16S rRNA in 2 intersubunit bridges.

Functionally, binds to 23S rRNA. Forms part of two intersubunit bridges in the 70S ribosome. The sequence is that of Large ribosomal subunit protein uL14 from Methanocorpusculum labreanum (strain ATCC 43576 / DSM 4855 / Z).